We begin with the raw amino-acid sequence, 209 residues long: dITP/XTP pyrophosphatase (209 aa).

Residue Ser7 to Lys12 participates in substrate binding. Asp70 functions as the Proton acceptor in the catalytic mechanism. Asp70 serves as a coordination point for Mg(2+). Residues Ser71, Phe154–Asp157, Lys177, and His182–Arg183 contribute to the substrate site.

The protein belongs to the HAM1 NTPase family. As to quaternary structure, homodimer. Mg(2+) serves as cofactor.

It catalyses the reaction XTP + H2O = XMP + diphosphate + H(+). The enzyme catalyses dITP + H2O = dIMP + diphosphate + H(+). The catalysed reaction is ITP + H2O = IMP + diphosphate + H(+). In terms of biological role, pyrophosphatase that catalyzes the hydrolysis of nucleoside triphosphates to their monophosphate derivatives, with a high preference for the non-canonical purine nucleotides XTP (xanthosine triphosphate), dITP (deoxyinosine triphosphate) and ITP. Seems to function as a house-cleaning enzyme that removes non-canonical purine nucleotides from the nucleotide pool, thus preventing their incorporation into DNA/RNA and avoiding chromosomal lesions. The sequence is that of dITP/XTP pyrophosphatase from Chlamydia trachomatis serovar L2 (strain ATCC VR-902B / DSM 19102 / 434/Bu).